A 120-amino-acid polypeptide reads, in one-letter code: Large ribosomal subunit protein bL19 (120 aa).

It belongs to the bacterial ribosomal protein bL19 family.

Its function is as follows. This protein is located at the 30S-50S ribosomal subunit interface and may play a role in the structure and function of the aminoacyl-tRNA binding site. The polypeptide is Large ribosomal subunit protein bL19 (Geobacillus kaustophilus (strain HTA426)).